Consider the following 158-residue polypeptide: Phosphopantetheine adenylyltransferase (158 aa).

Ser10 provides a ligand contact to substrate. ATP contacts are provided by residues 10 to 11 and His18; that span reads SF. The substrate site is built by Lys42, Leu74, and Arg88. ATP-binding positions include 89–91, Glu99, and 124–130; these read GLR and YANISSS.

Belongs to the bacterial CoaD family. In terms of assembly, homohexamer. Mg(2+) is required as a cofactor.

Its subcellular location is the cytoplasm. The catalysed reaction is (R)-4'-phosphopantetheine + ATP + H(+) = 3'-dephospho-CoA + diphosphate. It functions in the pathway cofactor biosynthesis; coenzyme A biosynthesis; CoA from (R)-pantothenate: step 4/5. Its function is as follows. Reversibly transfers an adenylyl group from ATP to 4'-phosphopantetheine, yielding dephospho-CoA (dPCoA) and pyrophosphate. This chain is Phosphopantetheine adenylyltransferase, found in Vesicomyosocius okutanii subsp. Calyptogena okutanii (strain HA).